The primary structure comprises 1058 residues: COP1-interacting protein 7 (1058 aa).

Disordered regions lie at residues 123-147 (LGGT…GDTV), 262-281 (HGNS…QEGR), and 330-463 (MGDV…GNDN). Polar residues-rich tracts occupy residues 126-136 (TWTSQKSTALS) and 262-276 (HGNS…SFET). A Nuclear localization signal 1 motif is present at residues 340–347 (SKKKKKKK). A compositionally biased stretch (basic residues) spans 340–353 (SKKKKKKKKNKKKS). The span at 403–414 (DSDESGEEEGFV) shows a compositional bias: acidic residues. Residues 431-438 (ERRHKSTS) carry the Nuclear localization signal 2 motif. The span at 432–446 (RRHKSTSHRQRKHKS) shows a compositional bias: basic residues. The segment covering 447–462 (HNGDDDSSNKETKGND) has biased composition (basic and acidic residues). Position 477 is a phosphoserine (Ser-477). The disordered stretch occupies residues 708-887 (AGEQTLDGKE…KSVELSRDPS (180 aa)). Over residues 757–773 (SKSEMEEERKKRMEELL) the composition is skewed to basic and acidic residues. Positions 764–771 (ERKKRMEE) match the Nuclear localization signal 3 motif. Positions 783 to 808 (KSSGGSVSSSLASKKTPTVTKSVKSS) are enriched in low complexity. Basic and acidic residues-rich tracts occupy residues 860–869 (KTEKAQEKKS) and 878–887 (KSVELSRDPS). Phosphoserine occurs at positions 915, 986, and 992. A disordered region spans residues 1020-1041 (STPPATEADHSRKKWNSEETSP). Basic and acidic residues predominate over residues 1026 to 1040 (EADHSRKKWNSEETS).

As to quaternary structure, interacts with COP1.

Its subcellular location is the nucleus. In terms of biological role, exhibits transcriptional activation activity. Positive regulator of light-regulated genes, probably being a direct downstream target of COP1 for mediating light control of gene expression. In Arabidopsis thaliana (Mouse-ear cress), this protein is COP1-interacting protein 7.